The following is a 427-amino-acid chain: Dihydrofolate synthetase (427 aa).

34-37 (GKGS) lines the ATP pocket. The Mg(2+) site is built by Glu-123 and His-153. Arg-275 and Asp-296 together coordinate ATP.

This sequence belongs to the folylpolyglutamate synthase family.

It localises to the cytoplasm. It carries out the reaction 7,8-dihydropteroate + L-glutamate + ATP = 7,8-dihydrofolate + ADP + phosphate + H(+). It functions in the pathway cofactor biosynthesis; tetrahydrofolylpolyglutamate biosynthesis. Functionally, glutamate-adding enzyme which catalyzes the binding of the first glutamyl side chain to dihydropteroate. Leads to the de nove synthesis of tetrahydrofolate. This Saccharomyces cerevisiae (strain ATCC 204508 / S288c) (Baker's yeast) protein is Dihydrofolate synthetase (FOL3).